A 152-amino-acid chain; its full sequence is Putative pseudoazurin (152 aa).

A signal peptide spans 1-23 (MPLKFGLIVATAALIASAASLMA). The Plastocyanin-like domain maps to 28 to 116 (VQMLNKGTDG…MGMVALIQVG (89 aa)). Residues H63, C101, H104, and M109 each coordinate Cu cation.

Cu cation serves as cofactor.

The protein localises to the periplasm. This soluble electron transfer copper protein is required for the inactivation of copper-containing nitrite reductase in the presence of oxygen. This is Putative pseudoazurin (azu) from Rhizobium leguminosarum bv. viciae.